The sequence spans 103 residues: UPF0145 protein RSKD131_1772 (103 aa).

Belongs to the UPF0145 family.

The polypeptide is UPF0145 protein RSKD131_1772 (Cereibacter sphaeroides (strain KD131 / KCTC 12085) (Rhodobacter sphaeroides)).